Reading from the N-terminus, the 599-residue chain is uncharacterized protein (599 aa).

A compositionally biased stretch (polar residues) spans 1–10 (MEQQSENVYF). The segment at 1 to 146 (MEQQSENVYF…EPSFTLTELP (146 aa)) is disordered. Residues 11–20 (SGSESESLSD) show a composition bias toward low complexity. The span at 24–44 (RAQPQNQNSDNSRSASLTPPD) shows a compositional bias: polar residues. Acidic residues-rich tracts occupy residues 46-56 (SDLEDYVDSDS) and 89-114 (NGSD…EEED). Residues 118–127 (RSSSRSAMDI) are compositionally biased toward low complexity. The segment covering 128–138 (SSEEDSGDDEP) has biased composition (acidic residues).

The protein belongs to the IIV-6 229L family.

This is an uncharacterized protein from Aedes vexans (Inland floodwater mosquito).